The primary structure comprises 364 residues: Methylthioribose-1-phosphate isomerase (364 aa).

Substrate is bound by residues 53 to 55 (RGA), Arg-90, and Gln-203. The active-site Proton donor is the Asp-244. Position 254–255 (254–255 (NK)) interacts with substrate.

This sequence belongs to the eIF-2B alpha/beta/delta subunits family. MtnA subfamily.

It carries out the reaction 5-(methylsulfanyl)-alpha-D-ribose 1-phosphate = 5-(methylsulfanyl)-D-ribulose 1-phosphate. It participates in amino-acid biosynthesis; L-methionine biosynthesis via salvage pathway; L-methionine from S-methyl-5-thio-alpha-D-ribose 1-phosphate: step 1/6. Its function is as follows. Catalyzes the interconversion of methylthioribose-1-phosphate (MTR-1-P) into methylthioribulose-1-phosphate (MTRu-1-P). The chain is Methylthioribose-1-phosphate isomerase from Sinorhizobium medicae (strain WSM419) (Ensifer medicae).